The primary structure comprises 114 residues: Nuclear transition protein 2 (114 aa).

The segment at 1 to 114 is disordered; it reads MDTKMQSLPT…KRRSSGRRYK (114 aa). Residues His-12, His-14, His-16, His-24, Cys-29, Cys-31, Cys-35, and Cys-38 each coordinate Zn(2+). A compositionally biased stretch (low complexity) spans 16–25; sequence HSSSRPQSHT. Positions 87–95 match the Nuclear localization signal motif; the sequence is GKVSKRKAV. Residues 90-114 are compositionally biased toward basic residues; sequence SKRKAVRRRKRTHRAKRRSSGRRYK. Thr-101 is modified (phosphothreonine; by PKA). Ser-109 bears the Phosphoserine; by PKA mark.

This sequence belongs to the nuclear transition protein 2 family. As to expression, testis.

Its subcellular location is the nucleus. The protein resides in the nucleolus. It is found in the chromosome. Its function is as follows. Plays a key role in the replacement of histones to protamine in the elongating spermatids of mammals. In condensing spermatids, loaded onto the nucleosomes, where it promotes the recruitment and processing of protamines, which are responsible for histone eviction. In Rattus norvegicus (Rat), this protein is Nuclear transition protein 2 (Tnp2).